We begin with the raw amino-acid sequence, 205 residues long: Large ribosomal subunit protein uL13 (205 aa).

It belongs to the universal ribosomal protein uL13 family.

This is Large ribosomal subunit protein uL13 (RPL13A) from Lupinus luteus (European yellow lupine).